Reading from the N-terminus, the 180-residue chain is HTH-type transcriptional regulator EcpR (180 aa).

Residues 122 to 180 (KDIKKDKITDREMKIIRMTAQGMQPKSIARIENCSVKTVYTHRRNAEAKLYSKIYKLVQ) enclose the HTH luxR-type domain. A DNA-binding region (H-T-H motif) is located at residues 146–165 (PKSIARIENCSVKTVYTHRR).

This sequence belongs to the EcpR/MatA family.

The protein resides in the cytoplasm. Part of the ecpRABCDE operon, which encodes the E.coli common pilus (ECP). ECP plays a dual role in early-stage biofilm development and host cell recognition. Positively regulates the expression of the ecp operon. This chain is HTH-type transcriptional regulator EcpR (ecpR), found in Klebsiella pneumoniae subsp. pneumoniae (strain ATCC 700721 / MGH 78578).